A 245-amino-acid chain; its full sequence is Gem-associated protein 2 (245 aa).

This sequence belongs to the gemin-2 family. In terms of assembly, component of the core survival motor neuron (SMN) complex composed of Smn, Gem2, Gem3, rig/Gem5 and one of 3 almost identical Gem4 paralogs encoded by Glos/Gem4a, Gem4b or Gem4c. Part of a minimal SMN complex composed of Smn and Gem2 only; this complex is active in UsnRNP assembly. The SMN complex associates with the entire set of spliceosomal snRNP Sm proteins, SmB, SmD1, SmD2, SmD3, SmE, SmF and SmG, and with the snRNP-specific proteins snRNP-U1-70K, U2A, snf/U1A and U5-116KD. In terms of tissue distribution, expressed in nurse cells and oocytes.

The protein resides in the cytoplasm. It localises to the U-body. Functionally, component of the survival motor neuron (SMN) complex that catalyzes the assembly of small nuclear ribonucleoproteins (snRNPs), the building blocks of the spliceosome, and thereby plays an important role in the splicing of cellular pre-mRNAs. Most spliceosomal snRNPs contain a common set of Sm proteins SNRPB, SNRPD1, SNRPD2, SNRPD3, SNRPE, SNRPF and SNRPG that assemble in a heptameric protein ring on the Sm site of the small nuclear RNA to form the core snRNP (Sm core). In the cytosol, the Sm proteins SNRPD1, SNRPD2, SNRPE, SNRPF and SNRPG (5Sm) are trapped in an inactive 6S pICln-Sm complex by the chaperone CLNS1A that controls the assembly of the core snRNP. To assemble core snRNPs, the SMN complex accepts the trapped 5Sm proteins from CLNS1A. Binding of snRNA inside 5Sm ultimately triggers eviction of the SMN complex, thereby allowing binding of SNRPD3 and SNRPB to complete assembly of the core snRNP. Within the SMN complex, GEMIN2 constrains the conformation of 5Sm, thereby promoting 5Sm binding to snRNA containing the snRNP code (a nonameric Sm site and a 3'-adjacent stem-loop), thus preventing progression of assembly until a cognate substrate is bound. Involved in adult motor function. The chain is Gem-associated protein 2 from Drosophila melanogaster (Fruit fly).